Reading from the N-terminus, the 74-residue chain is MSKDIYYSDKYYDEQFEYRHVVLPKELVKMVPKTHLMTEAEWRSIGVQQSRGWIHYMIHKPEPHILLFRRPKTD.

The protein belongs to the CKS family. In terms of assembly, forms a homohexamer that can probably bind six kinase subunits.

In terms of biological role, binds to the catalytic subunit of the cyclin dependent kinases Cdk1 and Cdk2, and is essential for their biological function. This Drosophila melanogaster (Fruit fly) protein is Cyclin-dependent kinases regulatory subunit (Cks30A).